Here is a 347-residue protein sequence, read N- to C-terminus: MIKEYYGAETFILNKDFAYILVIGTTDVSLIPGLTIAGATPELTHFTPAADAEYVLLGKCKSINTIPVSPTGIPTPALLTRASLSFINPLKIVVNAGSRILPKIPYIDLQGEPGKDIRKQALSMEKVNNIIENSIKLGEELSNEYELIMIGESIPAGTTTAMATLLALGYDAMDKVSSASPDNPKELKRKVVEEALRNLPTDSLQRLAKVSDPVLLGVAGTSLGFKGKILLAGGTQMTAAAAIINEFDKNKLKDITIGTTKWIVEDKFADMLSLAKQVGVKVLASMLDLSISAYEGIRAYEKGYVKEGVGAGGSAIMALVRGVSNNTLVRKIDELYGELVGSNNLHI.

It belongs to the UPF0284 family.

This is UPF0284 protein LS215_0030 from Saccharolobus islandicus (strain L.S.2.15 / Lassen #1) (Sulfolobus islandicus).